We begin with the raw amino-acid sequence, 1446 residues long: Centrosomal protein of 164 kDa (1446 aa).

An interaction with ATRIP region spans residues 1 to 195 (MARRPILLGD…PPQGLKAAAC (195 aa)). Residues 56 to 89 (APLPKGWKPCQNITGDLYYFNFDTGQSIWDHPCD) form the WW domain. Disordered regions lie at residues 106-132 (PGAIKKKDKKKKKEKKNKKDKETSKSP) and 159-185 (PPSALRGSQSVSLGSSADSGHLGEPTL). A compositionally biased stretch (basic residues) spans 109 to 121 (IKKKDKKKKKEKK). Residues 164 to 176 (RGSQSVSLGSSAD) show a composition bias toward polar residues. The residue at position 202 (serine 202) is a Phosphoserine. Disordered regions lie at residues 217 to 238 (EETNEEDEEESDNQSVRSSSEL), 250 to 408 (GGNF…SFLG), 424 to 570 (GDTL…EPAA), and 830 to 849 (KRQEVEREHERKMDKMKEEH). Acidic residues predominate over residues 218 to 228 (ETNEEDEEESD). Residues 257-277 (ESPRTSQPDKKDVSLDSDADR) show a composition bias toward basic and acidic residues. Residues 288–312 (GADSSVASANGSKSQGRGASPWNPQ) show a composition bias toward polar residues. 2 stretches are compositionally biased toward basic and acidic residues: residues 355–372 (KEGECRRESAAKEPKEAS) and 384–397 (SEIHGHLKDARHSG). A compositionally biased stretch (polar residues) spans 451–461 (SSIAEPQSKHT). Basic and acidic residues-rich tracts occupy residues 490-499 (PEWKEAEGPG) and 525-534 (ERAEEKHSQA). The stretch at 1143–1197 (EVLGNMRKNLNEETRHLDEMKSAMRKGHDLLKKKEEKLIQLESSLQEEVSDEDTL) forms a coiled coil. The segment at 1261–1287 (LGSLNSQPPPQGLGSQPPPPLFTSSLR) is disordered. Positions 1267 to 1281 (QPPPQGLGSQPPPPL) are enriched in pro residues. 2 positions are modified to phosphoserine: serine 1369 and serine 1371.

As to quaternary structure, interacts (via N-terminus) with ATRIP. Interacts with ATM, ATR and MDC1. Interacts with XPA (via N-terminus) upon UV irradiation. Interacts with CEP83, CCDC92, TTBK2, DVL3, NPHP3 and weakly with NPHP4. Interacts with DZIP1.

The protein localises to the cytoplasm. It localises to the cytoskeleton. Its subcellular location is the microtubule organizing center. The protein resides in the centrosome. It is found in the centriole. The protein localises to the nucleus. Its function is as follows. Plays a role in microtubule organization and/or maintenance for the formation of primary cilia (PC), a microtubule-based structure that protrudes from the surface of epithelial cells. Plays a critical role in G2/M checkpoint and nuclear divisions. A key player in the DNA damage-activated ATR/ATM signaling cascade since it is required for the proper phosphorylation of H2AX, RPA, CHEK2 and CHEK1. Plays a critical role in chromosome segregation, acting as a mediator required for the maintenance of genomic stability through modulation of MDC1, RPA and CHEK1. The chain is Centrosomal protein of 164 kDa from Mus musculus (Mouse).